Reading from the N-terminus, the 236-residue chain is 2,3,4,5-tetrahydropyridine-2,6-dicarboxylate N-acetyltransferase (236 aa).

It belongs to the transferase hexapeptide repeat family. DapH subfamily.

It carries out the reaction (S)-2,3,4,5-tetrahydrodipicolinate + acetyl-CoA + H2O = L-2-acetamido-6-oxoheptanedioate + CoA. It participates in amino-acid biosynthesis; L-lysine biosynthesis via DAP pathway; LL-2,6-diaminopimelate from (S)-tetrahydrodipicolinate (acetylase route): step 1/3. Its function is as follows. Catalyzes the transfer of an acetyl group from acetyl-CoA to tetrahydrodipicolinate. This Geobacillus thermodenitrificans (strain NG80-2) protein is 2,3,4,5-tetrahydropyridine-2,6-dicarboxylate N-acetyltransferase.